We begin with the raw amino-acid sequence, 470 residues long: MVDTMMNTNTDGVTAVPPIFPLPSTTPNRNNNNELAMLAQKQIVAGLLLQQPTIVQAAVNGTNSQKHLADIDYTNVIQTLQALGTTNLKAFSLLLDPQSQTSQLISEDTRPSASSSPSSTATAVSNSGQSNATSTSSSSTEPEYKPRNVREKVYADGYIMSFDKKSCCGTKEFWRCERKNDCNARMHSDINTREIVRKLHPHNHEKPSPEELAFYEQDFSTLHPNYCHPVKSINRSYMQRKLSRASHVSQALPIAPQQIKAEPMEVDTTNQTIQNFQQNNNLMLLASINAAATAAAAATSAGISPPVVGQKRVSTTVMPITLKSQRTTPKEEEDSSQLMSQEEFRITYELTKKLMEMMKPKTEIGVRWQGDEGSILLFLSHDNGAEENVFFPVVVMNRDEKSLITALEGFTGKRCEGKLALCYSQRVNVLVHEALISNWTHGKLFLVNTDAPALWRLTPVDAFGEPLNHV.

A disordered region spans residues 102 to 148 (SQLISEDTRPSASSSPSSTATAVSNSGQSNATSTSSSSTEPEYKPRN). The segment covering 111-140 (PSASSSPSSTATAVSNSGQSNATSTSSSST) has biased composition (low complexity). The segment at 145–204 (KPRNVREKVYADGYIMSFDKKSCCGTKEFWRCERKNDCNARMHSDINTREIVRKLHPHNH) adopts an FLYWCH-type zinc-finger fold.

Probable transcription factor. May bind to the promoters of target genes, including micro-RNA genes, in order to repress expression, and acting redundantly with flh-1 and flh-3. In Caenorhabditis elegans, this protein is FLYWCH transcription factor 2.